The chain runs to 481 residues: Ribulose bisphosphate carboxylase large chain (481 aa).

Residues 1–2 (MS) constitute a propeptide that is removed on maturation. N-acetylproline is present on Pro-3. Residue Lys-14 is modified to N6,N6,N6-trimethyllysine. Positions 123 and 173 each coordinate substrate. Lys-175 acts as the Proton acceptor in catalysis. Lys-177 contacts substrate. Lys-201, Asp-203, and Glu-204 together coordinate Mg(2+). Lys-201 is modified (N6-carboxylysine). His-294 acts as the Proton acceptor in catalysis. Substrate-binding residues include Arg-295, His-327, and Ser-379.

This sequence belongs to the RuBisCO large chain family. Type I subfamily. In terms of assembly, heterohexadecamer of 8 large chains and 8 small chains; disulfide-linked. The disulfide link is formed within the large subunit homodimers. It depends on Mg(2+) as a cofactor. The disulfide bond which can form in the large chain dimeric partners within the hexadecamer appears to be associated with oxidative stress and protein turnover.

Its subcellular location is the plastid. It carries out the reaction 2 (2R)-3-phosphoglycerate + 2 H(+) = D-ribulose 1,5-bisphosphate + CO2 + H2O. The catalysed reaction is D-ribulose 1,5-bisphosphate + O2 = 2-phosphoglycolate + (2R)-3-phosphoglycerate + 2 H(+). Functionally, ruBisCO catalyzes two reactions: the carboxylation of D-ribulose 1,5-bisphosphate, the primary event in carbon dioxide fixation, as well as the oxidative fragmentation of the pentose substrate in the photorespiration process. Both reactions occur simultaneously and in competition at the same active site. The chain is Ribulose bisphosphate carboxylase large chain from Cuscuta sandwichiana (Kauna'oa).